The primary structure comprises 167 residues: NADH-ubiquinone oxidoreductase chain 6 (167 aa).

5 helical membrane passes run 1–21, 27–47, 50–70, 88–108, and 143–163; these read MKMMVVFLFSILLVFGFVAFA, VYGGLSLVVSGGLGCAIVVSL, VFLGLIVFLIYLGGMLVVFGY, VALSMLLFTVIVESAWYLMSG, and WALVLLGWILFITIYVVLEVV.

This sequence belongs to the complex I subunit 6 family. In terms of assembly, core subunit of respiratory chain NADH dehydrogenase (Complex I) which is composed of 45 different subunits.

Its subcellular location is the mitochondrion inner membrane. It carries out the reaction a ubiquinone + NADH + 5 H(+)(in) = a ubiquinol + NAD(+) + 4 H(+)(out). Core subunit of the mitochondrial membrane respiratory chain NADH dehydrogenase (Complex I) which catalyzes electron transfer from NADH through the respiratory chain, using ubiquinone as an electron acceptor. Essential for the catalytic activity and assembly of complex I. In Osphranter robustus (Wallaroo), this protein is NADH-ubiquinone oxidoreductase chain 6 (MT-ND6).